Reading from the N-terminus, the 588-residue chain is DNA mismatch repair protein MutL (588 aa).

The protein belongs to the DNA mismatch repair MutL/HexB family.

Functionally, this protein is involved in the repair of mismatches in DNA. It is required for dam-dependent methyl-directed DNA mismatch repair. May act as a 'molecular matchmaker', a protein that promotes the formation of a stable complex between two or more DNA-binding proteins in an ATP-dependent manner without itself being part of a final effector complex. This is DNA mismatch repair protein MutL from Fervidobacterium nodosum (strain ATCC 35602 / DSM 5306 / Rt17-B1).